A 433-amino-acid polypeptide reads, in one-letter code: MAIIEEARSGQITDEMKEISKLEGIPVEKVRNRISECKIILIRNAKYPSKKLVPIGKGLTTKVNINIGTSDEVVNLQMELEKVKVANRWGDTLMDLSTGGDLDDIRREIIRASELPVGTVPVYQVFIESFKKKSGGAYFTEDELLSTVEKHLKDGVAFMTIHAGITKELAIRALKSNRIIPIVSRGGDMIAGWMIHNNSENPYRKHWGYLLEMFKEYDAVISLGDALRPGATGDAHDEFQVGELLETARLVKSALKEGVQVMVEGPGHVPLNEIAWDVKLMKKLTGGVPYYVLGPLPIDVGAPYDHIASAIGAAISSAAGADLLCYLTPAEHLGLPTVKQVEEGAIAYRIAAHAGDVVKLGRRVRKWDDEVSYYRGKLEWDNMISRLIDPQRAYQVYTQFGIPKVKACTMCGGYCPMMWAMDQVRKIGSSSSL.

Residues asparagine 66, methionine 94, tyrosine 123, histidine 162, 184–186, 225–228, and glutamate 264 contribute to the substrate site; these read SRG and DALR. Histidine 268 provides a ligand contact to Zn(2+). A substrate-binding site is contributed by tyrosine 291. Histidine 332 contributes to the Zn(2+) binding site. Residues cysteine 408, cysteine 411, and cysteine 415 each contribute to the [4Fe-4S] cluster site.

Belongs to the ThiC family. Requires [4Fe-4S] cluster as cofactor.

The catalysed reaction is 5-amino-1-(5-phospho-beta-D-ribosyl)imidazole + S-adenosyl-L-methionine = 4-amino-2-methyl-5-(phosphooxymethyl)pyrimidine + CO + 5'-deoxyadenosine + formate + L-methionine + 3 H(+). It participates in cofactor biosynthesis; thiamine diphosphate biosynthesis. Catalyzes the synthesis of the hydroxymethylpyrimidine phosphate (HMP-P) moiety of thiamine from aminoimidazole ribotide (AIR) in a radical S-adenosyl-L-methionine (SAM)-dependent reaction. In Saccharolobus solfataricus (strain ATCC 35092 / DSM 1617 / JCM 11322 / P2) (Sulfolobus solfataricus), this protein is Phosphomethylpyrimidine synthase 1.